The primary structure comprises 396 residues: Dihydrolipoyllysine-residue acetyltransferase component of pyruvate dehydrogenase complex (396 aa).

One can recognise a Lipoyl-binding domain in the interval 1–69; that stretch reads MPDIGLEEVE…KTDALIMRCE (69 aa). K35 is modified (N6-lipoyllysine). Residues 104–141 enclose the Peripheral subunit-binding (PSBD) domain; sequence HATPLIRRLARNLNINLYDVVGTGPKNRILKEDLDLYQ. Residue H369 is part of the active site.

Belongs to the 2-oxoacid dehydrogenase family. As to quaternary structure, forms a 24-polypeptide structural core with octahedral symmetry. It depends on (R)-lipoate as a cofactor.

The catalysed reaction is N(6)-[(R)-dihydrolipoyl]-L-lysyl-[protein] + acetyl-CoA = N(6)-[(R)-S(8)-acetyldihydrolipoyl]-L-lysyl-[protein] + CoA. Functionally, the pyruvate dehydrogenase complex catalyzes the overall conversion of pyruvate to acetyl-CoA and CO(2). It contains multiple copies of three enzymatic components: pyruvate dehydrogenase (E1), dihydrolipoamide acetyltransferase (E2) and lipoamide dehydrogenase (E3). This Buchnera aphidicola subsp. Acyrthosiphon pisum (strain APS) (Acyrthosiphon pisum symbiotic bacterium) protein is Dihydrolipoyllysine-residue acetyltransferase component of pyruvate dehydrogenase complex (aceF).